A 274-amino-acid polypeptide reads, in one-letter code: MEHIEILKAIFLGIVEGITEWLPISSTGHMILVNEFIRLNVTEAFKQVFLVVIQLGAILSVVLLYFNKLIPFSLNGGFYLKKDVVSMWIKIIISCIPATIVGIPFDDKIDALFYNYQTVSITLISFGILFIMIENHNKGKHPRITSISEITYTTAVLIGIFQLIAAVFPGTSRSGATIVGALLIGVSRTVAAEYTFFLAIPVMFGASLLKLFKFGLHFTSTEITILFIGMLSAFIVSILAIKFLMIYIKRHDFKAFGWYRIILGCAVLVYFLIV.

A run of 7 helical transmembrane segments spans residues 47–67 (QVFL…LYFN), 85–105 (VSMW…GIPF), 113–133 (FYNY…FIMI), 150–170 (ITYT…VFPG), 196–216 (FFLA…KFGL), 225–245 (ILFI…KFLM), and 253–273 (FKAF…YFLI).

This sequence belongs to the UppP family.

It is found in the cell membrane. It carries out the reaction di-trans,octa-cis-undecaprenyl diphosphate + H2O = di-trans,octa-cis-undecaprenyl phosphate + phosphate + H(+). Its function is as follows. Catalyzes the dephosphorylation of undecaprenyl diphosphate (UPP). Confers resistance to bacitracin. This chain is Undecaprenyl-diphosphatase 1, found in Clostridium acetobutylicum (strain ATCC 824 / DSM 792 / JCM 1419 / IAM 19013 / LMG 5710 / NBRC 13948 / NRRL B-527 / VKM B-1787 / 2291 / W).